Here is a 475-residue protein sequence, read N- to C-terminus: Peroxisome proliferator-activated receptor gamma (475 aa).

Residue Ser82 is modified to Phosphoserine; by MAPK. A DNA-binding region (nuclear receptor) is located at residues 106–180; the sequence is AIECRVCSDK…VGMSHNAIRF (75 aa). 2 NR C4-type zinc fingers span residues 109 to 129 and 146 to 168; these read CRVC…CEGC and CDLN…FQKC. Residues 175–250 are interaction with FAM120B; sequence HNAIRFGRMP…DKSPFVIYDM (76 aa). The NR LBD domain occupies 208 to 473; it reads DLRALAKHLY…HPLLQEIYKD (266 aa). Lys222 participates in a covalent cross-link: Glycyl lysine isopeptide (Lys-Gly) (interchain with G-Cter in ubiquitin). The 9aaTAD motif lies at 465–473; it reads PLLQEIYKD.

It belongs to the nuclear hormone receptor family. NR1 subfamily. In terms of assembly, interacts with FOXO1 (acetylated form). Heterodimer with other nuclear receptors, such as RXRA. The heterodimer with the retinoic acid receptor RXRA is called adipocyte-specific transcription factor ARF6. Interacts with NCOA6 coactivator, leading to a strong increase in transcription of target genes. Interacts with coactivator PPARBP, leading to a mild increase in transcription of target genes. Interacts with NOCA7 in a ligand-inducible manner. Interacts with NCOA1 and NCOA2 LXXLL motifs. Interacts with ASXL1, ASXL2, DNTTIP2, FAM120B, MAP2K1/MEK1, NR0B2, PDPK1, PRDM16, PRMT2 and TGFB1I1. Interacts (when activated by agonist) with PPP5C. Interacts with HELZ2 and THRAP3; the interaction stimulates the transcriptional activity of PPARG. Interacts with PER2, the interaction is ligand dependent and blocks PPARG recruitment to target promoters. Interacts with NOCT. Interacts with ACTN4. Interacts (when in the liganded conformation) with GPS2. Interacts with CRY1 and CRY2 in a ligand-dependent manner. In the absence of hormonal ligand, interacts with TACC1. In macrophages, interacts with PAQR3 and STUB1; the interactions promote PPARG poylubiquitination and STUB1-mediated degradation. In terms of processing, phosphorylated at basal conditions and dephosphorylated when treated with the ligand. May be dephosphorylated by PPP5C. The phosphorylated form may be inactive and dephosphorylation induces adipogenic activity. Ubiquitinated by E3 ubiquitin-protein ligase complex containing FBXO9; leading to proteasomal degradation. Ubiquitinated at Lys-222 by TRIM55 leading to proteasomal degradation. Ubiquitinated by E3 ubiquitin-protein ligase STUB1/CHIP; leading to proteasomal degradation.

It localises to the nucleus. It is found in the cytoplasm. Its activity is regulated as follows. PDPK1 activates its transcriptional activity independently of its kinase activity. Functionally, nuclear receptor that binds peroxisome proliferators such as hypolipidemic drugs and fatty acids. Once activated by a ligand, the nuclear receptor binds to DNA specific PPAR response elements (PPRE) and modulates the transcription of its target genes, such as acyl-CoA oxidase. It therefore controls the peroxisomal beta-oxidation pathway of fatty acids. Key regulator of adipocyte differentiation and glucose homeostasis. ARF6 acts as a key regulator of the tissue-specific adipocyte P2 (aP2) enhancer. Acts as a critical regulator of gut homeostasis by suppressing NF-kappa-B-mediated pro-inflammatory responses. Plays a role in the regulation of cardiovascular circadian rhythms by regulating the transcription of BMAL1 in the blood vessels. This Oryctolagus cuniculus (Rabbit) protein is Peroxisome proliferator-activated receptor gamma (PPARG).